Here is a 144-residue protein sequence, read N- to C-terminus: Globin (144 aa).

An N-acetylalanine modification is found at A1. A Globin domain is found at 1–144 (ALSAADAGLL…IISALQSAGK (144 aa)). H95 lines the heme b pocket.

The protein belongs to the globin family. In terms of assembly, monomer.

In Aplysia juliana (Walking sea hare), this protein is Globin.